The chain runs to 210 residues: Cancer/testis antigen 2 (210 aa).

2 stretches are compositionally biased toward gly residues: residues 1–47 (MQAE…GPRG) and 56–66 (PRGGAPRGPHG). Disordered stretches follow at residues 1–80 (MQAE…PCGA) and 154–197 (GLGS…DGCR). The segment covering 163–177 (QKARDLRTPKHKVSE) has biased composition (basic and acidic residues).

Belongs to the CTAG/PCC1 family. As to expression, testis and very low level in placenta and in some uterus samples. Observed in 25-50% of tumor samples of melanomas, non-small-cell lung carcinomas, bladder, prostate and head and neck cancers.

The polypeptide is Cancer/testis antigen 2 (CTAG2) (Homo sapiens (Human)).